The following is a 31-amino-acid chain: Cytochrome b6-f complex subunit 6 (31 aa).

Residues 3 to 23 (TITSYFGFLLAALTITPALFI) form a helical membrane-spanning segment.

The protein belongs to the PetL family. As to quaternary structure, the 4 large subunits of the cytochrome b6-f complex are cytochrome b6, subunit IV (17 kDa polypeptide, PetD), cytochrome f and the Rieske protein, while the 4 small subunits are PetG, PetL, PetM and PetN. The complex functions as a dimer.

It localises to the plastid. It is found in the chloroplast thylakoid membrane. Functionally, component of the cytochrome b6-f complex, which mediates electron transfer between photosystem II (PSII) and photosystem I (PSI), cyclic electron flow around PSI, and state transitions. PetL is important for photoautotrophic growth as well as for electron transfer efficiency and stability of the cytochrome b6-f complex. The sequence is that of Cytochrome b6-f complex subunit 6 from Zea mays (Maize).